Here is a 473-residue protein sequence, read N- to C-terminus: Reticulon-4 receptor (473 aa).

Positions 1–26 are cleaved as a signal peptide; the sequence is MKRASAGGSRLLAWVLWLQAWQVAAP. 2 disulfides stabilise this stretch: Cys27-Cys33 and Cys31-Cys43. An LRRNT domain is found at 27 to 54; that stretch reads CPGACVCYNEPKVTTSCPQQGLQAVPVG. LRR repeat units follow at residues 55 to 79, 81 to 103, 104 to 128, 129 to 152, 153 to 176, 178 to 200, 202 to 224, 225 to 248, and 250 to 273; these read IPAASQRIFLHGNRISHVPAASFRA, RNLTILWLHSNVLARIDAAAFTG, LALLEQLDLSDNAQLRSVDPATFHG, LGRLHTLHLDRCGLQELGPGLFRG, LAALQYLYLQDNALQALPDDTFRD, GNLTHLFLHGNRISSVPERAFRG, HSLDRLLLHQNRVAHVHPHAFRD, LGRLMTLYLFANNLSALPTEALAP, and RALQYLRLNDNPWVCDCRARPLWA. Asn82 carries N-linked (GlcNAc...) asparagine glycosylation. N-linked (GlcNAc...) asparagine glycosylation occurs at Asn179. Residues 260-310 form the LRRCT domain; that stretch reads NPWVCDCRARPLWAWLQKFRGSSSEVPCSLPQRLAGRDLKRLAANDLQGCA. Disulfide bonds link Cys264–Cys287, Cys266–Cys335, and Cys309–Cys336. The tract at residues 346–447 is disordered; it reads VLEPGRPASA…GGGTGDSEGS (102 aa). Over residues 413 to 429 the composition is skewed to basic residues; the sequence is PRRRPGCSRKNRTRSHC. Residues 434–445 are compositionally biased toward gly residues; it reads AGSGGGGTGDSE. Ser447 carries the GPI-anchor amidated serine lipid modification. A propeptide spans 448–473 (removed in mature form); the sequence is GALPSLTCSLTPLGLALVLWTVLGPC.

Belongs to the Nogo receptor family. In terms of assembly, homodimer. Interacts with MAG. Interacts with RTN4. Interacts with NGFR. Interacts with LINGO1. Interacts with KIAA0319L. Interacts with OLFM1; this inhibits interaction with LINGO1 and NGFR. Interacts with OMG. In terms of processing, N-glycosylated. O-glycosylated. Contains terminal sialic acid groups on its glycan chains. Widespread in the brain but highest levels in the gray matter. Low levels in heart and kidney; not expressed in oligodendrocytes (white matter).

Its subcellular location is the cell membrane. The protein localises to the membrane raft. The protein resides in the cell projection. It localises to the dendrite. It is found in the axon. Its subcellular location is the perikaryon. Its function is as follows. Receptor for RTN4, OMG and MAG. Functions as a receptor for the sialylated gangliosides GT1b and GM1. Besides, functions as a receptor for chondroitin sulfate proteoglycans. Can also bind heparin. Intracellular signaling cascades are triggered via the coreceptor NGFR. Signaling mediates activation of Rho and downstream reorganization of the actin cytoskeleton. Mediates axonal growth inhibition. Plays a role in regulating axon regeneration and neuronal plasticity in the adult central nervous system. Plays a role in postnatal brain development. Required for normal axon migration across the brain midline and normal formation of the corpus callosum. Protects motoneurons against apoptosis; protection against apoptosis is probably mediated via interaction with MAG. Acts in conjunction with RTN4 and LINGO1 in regulating neuronal precursor cell motility during cortical development. Like other family members, plays a role in restricting the number dendritic spines and the number of synapses that are formed during brain development. This Homo sapiens (Human) protein is Reticulon-4 receptor (RTN4R).